Reading from the N-terminus, the 122-residue chain is Large ribosomal subunit protein uL14c (122 aa).

Belongs to the universal ribosomal protein uL14 family. In terms of assembly, part of the 50S ribosomal subunit.

It localises to the plastid. It is found in the chloroplast. Its function is as follows. Binds to 23S rRNA. This is Large ribosomal subunit protein uL14c from Welwitschia mirabilis (Tree tumbo).